The sequence spans 438 residues: uncharacterized protein (438 aa).

This is an uncharacterized protein from Encephalitozoon cuniculi (strain GB-M1) (Microsporidian parasite).